We begin with the raw amino-acid sequence, 243 residues long: Venom nerve growth factor 3 (243 aa).

Positions 1 to 18 (MSMLCYTLIIAFLIGIWA) are cleaved as a signal peptide. Residues 19–125 (APKSEDNVPL…ALNRNIRAKR (107 aa)) constitute a propeptide that is removed on maturation. Over residues 47-66 (GLKTSRNTDQRHPAPKKAED) the composition is skewed to basic and acidic residues. Residues 47–67 (GLKTSRNTDQRHPAPKKAEDQ) are disordered. 3 disulfides stabilise this stretch: C139/C204, C182/C232, and C192/C234. N-linked (GlcNAc...) asparagine glycosylation is found at N148 and N151.

It belongs to the NGF-beta family. In terms of assembly, homodimer; non-covalently linked. In terms of tissue distribution, expressed by the venom gland.

Its subcellular location is the secreted. Its function is as follows. Nerve growth factor is important for the development and maintenance of the sympathetic and sensory nervous systems. It stimulates division and differentiation of sympathetic and embryonic sensory neurons as well as basal forebrain cholinergic neurons in the brain. Its relevance in the snake venom is not clear. However, it has been shown to inhibit metalloproteinase-dependent proteolysis of platelet glycoprotein Ib alpha, suggesting a metalloproteinase inhibition to prevent metalloprotease autodigestion and/or protection against prey proteases. Binds a lipid between the two protein chains in the homodimer. The lipid-bound form promotes histamine relase from mouse mast cells, contrary to the lipid-free form. The protein is Venom nerve growth factor 3 of Tropidechis carinatus (Australian rough-scaled snake).